Reading from the N-terminus, the 284-residue chain is 2-dehydro-3-deoxyphosphooctonate aldolase (284 aa).

It belongs to the KdsA family.

The protein resides in the cytoplasm. The enzyme catalyses D-arabinose 5-phosphate + phosphoenolpyruvate + H2O = 3-deoxy-alpha-D-manno-2-octulosonate-8-phosphate + phosphate. The protein operates within carbohydrate biosynthesis; 3-deoxy-D-manno-octulosonate biosynthesis; 3-deoxy-D-manno-octulosonate from D-ribulose 5-phosphate: step 2/3. Its pathway is bacterial outer membrane biogenesis; lipopolysaccharide biosynthesis. The polypeptide is 2-dehydro-3-deoxyphosphooctonate aldolase (Glaesserella parasuis serovar 5 (strain SH0165) (Haemophilus parasuis)).